We begin with the raw amino-acid sequence, 506 residues long: Hippocampus abundant transcript-like protein 1 (506 aa).

The interval 1–25 (MSVEPPPELEEKAASEPEAGAMPEK) is disordered. Residues 1–49 (MSVEPPPELEEKAASEPEAGAMPEKRAGAQAAGSTWLQGFGRPSVYHAA) lie on the Extracellular side of the membrane. A helical transmembrane segment spans residues 50–70 (IVIFLEFFAWGLLTTPMLTVL). The Cytoplasmic segment spans residues 71-82 (HETFSQHTFLMN). Residues 83–103 (GLIQGVKGLLSFLSAPLIGAL) form a helical membrane-spanning segment. The Extracellular segment spans residues 104-111 (SDVWGRKP). The helical transmembrane segment at 112-132 (FLLGTVFFTCFPIPLMRISPW) threads the bilayer. Topologically, residues 133 to 134 (WY) are cytoplasmic. The helical transmembrane segment at 135-155 (FAMISVSGVFSVTFSVIFAYV) threads the bilayer. Residues 156 to 168 (ADVTQEHERSTAY) are Extracellular-facing. A helical membrane pass occupies residues 169–189 (GWVSATFAASLVSSPAIGAYL). Residues 190 to 196 (SASYGDS) lie on the Cytoplasmic side of the membrane. The helical transmembrane segment at 197–217 (LVVLVATVVALLDICFILVAV) threads the bilayer. Residues 218–255 (PESLPEKMRPVSWGAQISWKQADPFASLKKVGKDSTVL) are Extracellular-facing. The chain crosses the membrane as a helical span at residues 256-276 (LICITVFLSYLPEAGQYSSFF). Residues 277-281 (LYLRQ) are Cytoplasmic-facing. Residues 282-302 (VIGFGSVKIAAFIAMVGILSI) traverse the membrane as a helical segment. Over 303–319 (VAQTAFLSILMRSLGNK) the chain is Extracellular. Residues 320–340 (NTVLLGLGFQMLQLAWYGFGS) traverse the membrane as a helical segment. Residue Q341 is a topological domain, cytoplasmic. The helical transmembrane segment at 342 to 362 (AWMMWAAGTVAAMSSITFPAI) threads the bilayer. Residues 363 to 387 (SALVSRNAESDQQGVAQGIITGIRG) are Extracellular-facing. The chain crosses the membrane as a helical span at residues 388–408 (LCNGLGPALYGFIFYMFHVEL). Over 409–428 (TELGPKLNSNNVPLQGAVIP) the chain is Cytoplasmic. Residues 429–449 (GPPFLFGACIVLMSFLVALFI) form a helical membrane-spanning segment. The Extracellular segment spans residues 450–506 (PEYSKASGVQKHSNSSSGSLTNTPERGSDEDIEPLLQDSSIWELSSFEEPGNQCTEL). The interval 457 to 481 (GVQKHSNSSSGSLTNTPERGSDEDI) is disordered. Residues 459 to 474 (QKHSNSSSGSLTNTPE) show a composition bias toward polar residues. An N-linked (GlcNAc...) asparagine glycan is attached at N463.

Belongs to the major facilitator superfamily.

The protein resides in the membrane. The chain is Hippocampus abundant transcript-like protein 1 from Homo sapiens (Human).